Consider the following 146-residue polypeptide: Ribonuclease H (146 aa).

An RNase H type-1 domain is found at 4-145; sequence ELNKVVIYTD…ADILARSQIS (142 aa). The Mg(2+) site is built by D13, E51, D73, and D137.

This sequence belongs to the RNase H family. In terms of assembly, monomer. It depends on Mg(2+) as a cofactor.

It localises to the cytoplasm. It carries out the reaction Endonucleolytic cleavage to 5'-phosphomonoester.. Its function is as follows. Endonuclease that specifically degrades the RNA of RNA-DNA hybrids. The chain is Ribonuclease H from Ehrlichia canis (strain Jake).